Reading from the N-terminus, the 96-residue chain is Integration host factor subunit beta (96 aa).

The protein belongs to the bacterial histone-like protein family. As to quaternary structure, heterodimer of an alpha and a beta chain.

In terms of biological role, this protein is one of the two subunits of integration host factor, a specific DNA-binding protein that functions in genetic recombination as well as in transcriptional and translational control. This chain is Integration host factor subunit beta, found in Caulobacter vibrioides (strain ATCC 19089 / CIP 103742 / CB 15) (Caulobacter crescentus).